Here is an 85-residue protein sequence, read N- to C-terminus: Large ribosomal subunit protein bL27 (85 aa).

Positions 1 to 22 (MAHKKAAGSTRNGRDSESKRLG) are disordered.

Belongs to the bacterial ribosomal protein bL27 family.

This chain is Large ribosomal subunit protein bL27, found in Pseudoalteromonas translucida (strain TAC 125).